The chain runs to 133 residues: Alcohol dehydrogenase, 15 kDa subunit (133 aa).

The first 24 residues, 1–24 (MFRRIVPVLGLALGLGLASQAAMA), serve as a signal peptide directing secretion. Positions 23-43 (MAQEQSPPPPPAVQGTPGKDF) are disordered. Q25 carries the post-translational modification Pyrrolidone carboxylic acid.

As to quaternary structure, the alcohol dehydrogenase multicomponent enzyme system is composed of a dehydrogenase subunit I (AdhA), a cytochrome c subunit II (AdhB) and a subunit III (AdhS).

It is found in the cell membrane. Functionally, part of the alcohol dehydrogenase multicomponent enzyme system which is involved in the production of acetic acid and in the ethanol oxidase respiratory chain. Does not play an obligatory role for the alcohol dehydrogenase (ADH) activity. In Gluconobacter oxydans (strain 621H) (Gluconobacter suboxydans), this protein is Alcohol dehydrogenase, 15 kDa subunit.